We begin with the raw amino-acid sequence, 962 residues long: Nonsense-mediated mRNA decay factor SMG8 (962 aa).

The disordered stretch occupies residues 634 to 661 (RSPEISSQIASSGLSSRSNSTSSGTSSA). Residues 639 to 661 (SSQIASSGLSSRSNSTSSGTSSA) show a composition bias toward low complexity.

Belongs to the SMG8 family.

Its function is as follows. Involved in nonsense-mediated decay (NMD) of mRNAs containing premature stop codons. Probable component of kinase complex containing nonC and recruited to stalled ribosomes. The protein is Nonsense-mediated mRNA decay factor SMG8 of Drosophila virilis (Fruit fly).